The sequence spans 345 residues: Very-long-chain 3-oxoacyl-CoA reductase (345 aa).

The chain crosses the membrane as a helical span at residues 26 to 46; that stretch reads GAAVLLATGGLFLASRVLTFV. NADP(+)-binding residues include Val71, Asp125, Asp133, Asn152, Tyr219, Lys223, Ile252, and Ser254. Catalysis depends on Tyr219, which acts as the Proton donor. The active-site Lowers pKa of active site Tyr is Lys223.

It belongs to the short-chain dehydrogenases/reductases (SDR) family.

It is found in the endoplasmic reticulum membrane. It catalyses the reaction a very-long-chain (3R)-3-hydroxyacyl-CoA + NADP(+) = a very-long-chain 3-oxoacyl-CoA + NADPH + H(+). It participates in lipid metabolism; fatty acid biosynthesis. Its function is as follows. Component of the microsomal membrane bound fatty acid elongation system, which produces the 26-carbon very long-chain fatty acids (VLCFA) from palmitate. Catalyzes the reduction of the 3-ketoacyl-CoA intermediate that is formed in each cycle of fatty acid elongation. VLCFAs serve as precursors for ceramide and sphingolipids. The chain is Very-long-chain 3-oxoacyl-CoA reductase from Aspergillus clavatus (strain ATCC 1007 / CBS 513.65 / DSM 816 / NCTC 3887 / NRRL 1 / QM 1276 / 107).